A 446-amino-acid chain; its full sequence is ATP synthase subunit b-delta (446 aa).

Residues 1–168 form an ATP synthase subunit b region; the sequence is MSTFIGQLFG…PATADVDYPL (168 aa). A helical membrane pass occupies residues 4–24; sequence FIGQLFGFAVIVYLVWRFIVP. An ATP synthase subunit delta region spans residues 169 to 446; it reads LAKMRSASRR…LAAAEARLPD (278 aa).

The protein in the N-terminal section; belongs to the ATPase B chain family. This sequence in the C-terminal section; belongs to the ATPase delta chain family. In terms of assembly, F-type ATPases have 2 components, F(1) - the catalytic core - and F(0) - the membrane proton channel. F(1) has five subunits: alpha(3), beta(3), gamma(1), delta(1), epsilon(1). F(0) has three main subunits: a(1), b(2) and c(10-14). The alpha and beta chains form an alternating ring which encloses part of the gamma chain. F(1) is attached to F(0) by a central stalk formed by the gamma and epsilon chains, while a peripheral stalk is formed by the delta and b chains.

It localises to the cell membrane. F(1)F(0) ATP synthase produces ATP from ADP in the presence of a proton or sodium gradient. F-type ATPases consist of two structural domains, F(1) containing the extramembraneous catalytic core and F(0) containing the membrane proton channel, linked together by a central stalk and a peripheral stalk. During catalysis, ATP synthesis in the catalytic domain of F(1) is coupled via a rotary mechanism of the central stalk subunits to proton translocation. Functionally, this fusion protein includes a component of the F(0) channel (subunit b) and of the F(1) subunit (subunit delta). Two copies of subunit b and one of delta together form the peripheral 'stator' stalk which links F(1) to F(0). The protein is ATP synthase subunit b-delta (atpFH) of Mycobacterium tuberculosis (strain CDC 1551 / Oshkosh).